Reading from the N-terminus, the 135-residue chain is Galectin-1 (135 aa).

N-acetylalanine is present on Ala-2. Residues 4 to 135 (GLVASNLNLK…DFKIKCVAFE (132 aa)) form the Galectin domain. N6-acetyllysine occurs at positions 13, 19, and 29. Residue Ser-30 is modified to Phosphoserine. Residues 45-49 (HFNPR), His-53, Asn-62, and 69-72 (WGAE) contribute to the a beta-D-galactoside site. Lys-128 bears the N6-acetyllysine mark.

As to quaternary structure, homodimer. Binds LGALS3BP. Interacts with CD2, CD3, CD4, CD6, CD7, CD43, ALCAM and CD45. Interacts with laminin (via poly-N-acetyllactosamine). Interacts with SUSD2. Interacts with cargo receptor TMED10; the interaction mediates the translocation from the cytoplasm into the ERGIC (endoplasmic reticulum-Golgi intermediate compartment) and thereby secretion.

It is found in the secreted. The protein resides in the extracellular space. The protein localises to the extracellular matrix. Its subcellular location is the cytoplasm. Its function is as follows. Lectin that binds beta-galactoside and a wide array of complex carbohydrates. Plays a role in regulating apoptosis, cell proliferation and cell differentiation. Inhibits CD45 protein phosphatase activity and therefore the dephosphorylation of Lyn kinase. Strong inducer of T-cell apoptosis. This chain is Galectin-1 (LGALS1), found in Sus scrofa (Pig).